Consider the following 542-residue polypeptide: Ribonuclease Y (542 aa).

A helical membrane pass occupies residues Met1–Ala21. The tract at residues Ser52–Ala92 is disordered. The segment covering Ala59–Ala92 has biased composition (basic and acidic residues). A KH domain is found at Val229 to Leu289. The HD domain maps to Val355–Ala449.

The protein belongs to the RNase Y family.

The protein localises to the cell membrane. Its function is as follows. Endoribonuclease that initiates mRNA decay. The polypeptide is Ribonuclease Y (Cutibacterium acnes (strain DSM 16379 / KPA171202) (Propionibacterium acnes)).